A 157-amino-acid polypeptide reads, in one-letter code: Protein Smg (157 aa).

It belongs to the Smg family.

This is Protein Smg from Yersinia pestis (strain Pestoides F).